The chain runs to 411 residues: tRNA (guanine(37)-N(1))-methyltransferase (411 aa).

S-adenosyl-L-methionine-binding positions include His216, 254–255 (DL), 282–283 (DG), and Asn303. Positions 391-411 (ERQASKQDDPKRRKVAAENAA) are disordered.

The protein belongs to the class I-like SAM-binding methyltransferase superfamily. TRM5/TYW2 family. Monomer.

Its subcellular location is the mitochondrion matrix. The protein resides in the nucleus. The protein localises to the cytoplasm. The enzyme catalyses guanosine(37) in tRNA + S-adenosyl-L-methionine = N(1)-methylguanosine(37) in tRNA + S-adenosyl-L-homocysteine + H(+). In terms of biological role, specifically methylates the N1 position of guanosine-37 in various cytoplasmic and mitochondrial tRNAs. Methylation is not dependent on the nature of the nucleoside 5' of the target nucleoside. This is the first step in the biosynthesis of wybutosine (yW), a modified base adjacent to the anticodon of tRNAs and required for accurate decoding. The chain is tRNA (guanine(37)-N(1))-methyltransferase from Phytophthora infestans (strain T30-4) (Potato late blight agent).